Here is a 209-residue protein sequence, read N- to C-terminus: MTKIGLIDYGMGNLFSVQQAFKRFNQPLDIISDIKTLQSCDALILPGVGAFDPAMMNLRKTELVPSIIDWVNNGKPLFGICLGLQLLFEASDEGTSEGLGVIKGHIRRLPQEKDERIPHIGWSPIYKTNECPILENYPGSNWMYFVHSYSACPLEPKHTVAVTKFGKTDVSSMVWHKNTGACQFHPEKSGVAGQKIIFNWINWLKKNKF.

The Glutamine amidotransferase type-1 domain maps to 3–209 (KIGLIDYGMG…WINWLKKNKF (207 aa)). The active-site Nucleophile is the C81. Catalysis depends on residues H185 and E187.

In terms of assembly, heterodimer of HisH and HisF.

It localises to the cytoplasm. It catalyses the reaction 5-[(5-phospho-1-deoxy-D-ribulos-1-ylimino)methylamino]-1-(5-phospho-beta-D-ribosyl)imidazole-4-carboxamide + L-glutamine = D-erythro-1-(imidazol-4-yl)glycerol 3-phosphate + 5-amino-1-(5-phospho-beta-D-ribosyl)imidazole-4-carboxamide + L-glutamate + H(+). The enzyme catalyses L-glutamine + H2O = L-glutamate + NH4(+). It participates in amino-acid biosynthesis; L-histidine biosynthesis; L-histidine from 5-phospho-alpha-D-ribose 1-diphosphate: step 5/9. Its function is as follows. IGPS catalyzes the conversion of PRFAR and glutamine to IGP, AICAR and glutamate. The HisH subunit catalyzes the hydrolysis of glutamine to glutamate and ammonia as part of the synthesis of IGP and AICAR. The resulting ammonia molecule is channeled to the active site of HisF. In Prochlorococcus marinus (strain NATL2A), this protein is Imidazole glycerol phosphate synthase subunit HisH.